Reading from the N-terminus, the 358-residue chain is Peptide chain release factor 1 (358 aa).

Gln237 is modified (N5-methylglutamine). A compositionally biased stretch (basic and acidic residues) spans Glu291–Arg309. Residues Glu291–Tyr313 are disordered.

This sequence belongs to the prokaryotic/mitochondrial release factor family. Post-translationally, methylated by PrmC. Methylation increases the termination efficiency of RF1.

The protein localises to the cytoplasm. Peptide chain release factor 1 directs the termination of translation in response to the peptide chain termination codons UAG and UAA. This chain is Peptide chain release factor 1, found in Mycoplasmopsis agalactiae (strain NCTC 10123 / CIP 59.7 / PG2) (Mycoplasma agalactiae).